The chain runs to 321 residues: MATH domain and coiled-coil domain-containing protein At3g58260 (321 aa).

One can recognise an MATH domain in the interval 6–135 (NNTFTWVIKN…NDEVMVAVAV (130 aa)). Residues 232–283 (KLDWLEKKLDELFEKKKEEADKIRMQNIEEELKDLRQKCSSLEALLKKEKTG) adopt a coiled-coil conformation.

In Arabidopsis thaliana (Mouse-ear cress), this protein is MATH domain and coiled-coil domain-containing protein At3g58260.